The sequence spans 199 residues: Hematopoietic prostaglandin D synthase (199 aa).

Residues 2–79 (PNYKLTYFNL…YLARESGLAG (78 aa)) form the GST N-terminal domain. Residues Tyr8, Arg14, Trp39, 49–51 (GKV), and 63–64 (QS) each bind glutathione. In terms of domain architecture, GST C-terminal spans 81–199 (TPVEQALADA…WIQKRPKTAI (119 aa)).

This sequence belongs to the GST superfamily. Sigma family. Glutathione is required as a cofactor. As to expression, highly expressed in liver, kidney, small intestine and colon, moderately in pancreas, bone marrow, lung and ovary, and expressed at low levels in spleen, thymus, heart and brain. Not detected in oviduct or skin (at protein level). Expressed in liver.

It localises to the cytoplasm. It catalyses the reaction prostaglandin H2 = prostaglandin D2. The enzyme catalyses RX + glutathione = an S-substituted glutathione + a halide anion + H(+). The catalysed reaction is 2-glyceryl-prostaglandin H2 = 2-glyceryl-prostaglandin D2. Its function is as follows. Bifunctional enzyme which catalyzes both the conversion of PGH2 to PGD2, a prostaglandin involved in smooth muscle contraction/relaxation and a potent inhibitor of platelet aggregation, and the conjugation of glutathione with a wide range of aryl halides, organic isothiocyanates and alpha,beta-unsaturated carbonyls. Also exhibits low glutathione-peroxidase activity towards cumene hydroperoxide and t-butyl hydroperoxide. The polypeptide is Hematopoietic prostaglandin D synthase (HPGDS) (Gallus gallus (Chicken)).